Here is a 400-residue protein sequence, read N- to C-terminus: Enoyl-[acyl-carrier-protein] reductase [NADH] 1 (400 aa).

NAD(+)-binding positions include 48–53, 74–75, 111–112, and 139–140; these read GASSGY, FE, DA, and LA. Tyrosine 225 serves as a coordination point for substrate. The Proton donor role is filled by tyrosine 235. NAD(+) contacts are provided by residues lysine 244 and 273-275; that span reads VVT.

This sequence belongs to the TER reductase family. As to quaternary structure, monomer.

The enzyme catalyses a 2,3-saturated acyl-[ACP] + NAD(+) = a (2E)-enoyl-[ACP] + NADH + H(+). It functions in the pathway lipid metabolism; fatty acid biosynthesis. Involved in the final reduction of the elongation cycle of fatty acid synthesis (FAS II). Catalyzes the reduction of a carbon-carbon double bond in an enoyl moiety that is covalently linked to an acyl carrier protein (ACP). This Vibrio parahaemolyticus serotype O3:K6 (strain RIMD 2210633) protein is Enoyl-[acyl-carrier-protein] reductase [NADH] 1.